The following is a 293-amino-acid chain: Protein Pat (293 aa).

Residues 187-287 (LPDIILNPLD…LLLRTRQDRA (101 aa)) form the BEN domain.

Interacts with poc1b. An mRNA and protein component of germ plasm and primordial germ cells (PGCs) throughout oogenesis and early development, being first localized to the granulo-fibrillar material (GFM) of the mitochondrial cloud in stage I and II oocytes and to the periphery of mature germinal granules both in oocytes and in embryos. Shows some somatic expression including the ectodermal cells of tailbud embryos. In adults, only expressed in ovaries.

It localises to the cytoplasm. The protein resides in the nucleus. Probably plays a role in germ plasm formation, positioning and maintenance. The protein is Protein Pat of Xenopus laevis (African clawed frog).